Reading from the N-terminus, the 539-residue chain is 2,3-dihydroxybenzoate-AMP ligase (539 aa).

G191 lines the ATP pocket. Substrate-binding positions include 234 to 235 and S240; that span reads HN. The ATP site is built by G307, V329, D413, R428, and K519. Residue K519 coordinates substrate.

The protein belongs to the ATP-dependent AMP-binding enzyme family.

The protein localises to the cytoplasm. It carries out the reaction 2,3-dihydroxybenzoate + holo-[ACP] + ATP = 2,3-dihydroxybenzoyl-[ACP] + AMP + diphosphate. Its pathway is siderophore biosynthesis; bacillibactin biosynthesis. Its function is as follows. Involved in the biosynthesis of the catecholic siderophore bacillibactin. Catalyzes the activation of the carboxylate group of 2,3-dihydroxy-benzoate (DHB), via ATP-dependent PPi exchange reactions, to the acyladenylate. The chain is 2,3-dihydroxybenzoate-AMP ligase from Bacillus subtilis (strain 168).